The sequence spans 426 residues: Glutamate-1-semialdehyde 2,1-aminomutase (426 aa).

Residue K265 is modified to N6-(pyridoxal phosphate)lysine.

The protein belongs to the class-III pyridoxal-phosphate-dependent aminotransferase family. HemL subfamily. As to quaternary structure, homodimer. Pyridoxal 5'-phosphate serves as cofactor.

Its subcellular location is the cytoplasm. It catalyses the reaction (S)-4-amino-5-oxopentanoate = 5-aminolevulinate. The protein operates within porphyrin-containing compound metabolism; protoporphyrin-IX biosynthesis; 5-aminolevulinate from L-glutamyl-tRNA(Glu): step 2/2. This is Glutamate-1-semialdehyde 2,1-aminomutase from Yersinia enterocolitica serotype O:8 / biotype 1B (strain NCTC 13174 / 8081).